A 277-amino-acid chain; its full sequence is Heme oxygenase (277 aa).

His-29 contacts heme b.

The protein belongs to the heme oxygenase family.

Its subcellular location is the microsome. The protein resides in the endoplasmic reticulum. The enzyme catalyses heme b + 3 reduced [NADPH--hemoprotein reductase] + 3 O2 = biliverdin IXalpha + CO + Fe(2+) + 3 oxidized [NADPH--hemoprotein reductase] + 3 H2O + H(+). Functionally, heme oxygenase cleaves the heme ring at the alpha methene bridge to form biliverdin. Biliverdin is subsequently converted to bilirubin by biliverdin reductase. Under physiological conditions, the activity of heme oxygenase is highest in the spleen, where senescent erythrocytes are sequestrated and destroyed. In Takifugu rubripes (Japanese pufferfish), this protein is Heme oxygenase (hmox).